Here is a 486-residue protein sequence, read N- to C-terminus: Retrograde regulation protein 3 (486 aa).

The 9aaTAD 1 motif lies at 27–35; it reads ETLDFSLVT. 2 stretches are compositionally biased toward polar residues: residues 75-94 and 101-130; these read NNNLMGSQARSNSQTPTAST and SQSSYLDDMFRTSQGGRPVTQNSISSIGQG. Residues 75–130 form a disordered region; sequence NNNLMGSQARSNSQTPTASTIYEEAESQSSYLDDMFRTSQGGRPVTQNSISSIGQG. 3 positions are modified to phosphoserine: S81, S123, and S142. T150 carries the post-translational modification Phosphothreonine. Residues 189–197 carry the 9aaTAD 2 motif; it reads SSINSDMMT. Phosphoserine is present on residues S227, S236, and S241. The interval 243 to 274 is disordered; sequence RHGSINTPRTRHTSISSNMTENIGPGSVPKIL. Residues 246 to 263 show a composition bias toward polar residues; the sequence is SINTPRTRHTSISSNMTE. At S269 the chain carries Phosphoserine. Positions 285–344 constitute a bHLH domain; it reads RKREFHNAVERRRRELIKQKIKELGQLVPPSLLNYDDLGKQIKPNKGIILDRTVEYLQYL. The interval 374–395 is disordered; sequence ALSPFTNNHHASSGQNNSENSE.

As to quaternary structure, binds DNA as a heterodimer with RTG1.

Its subcellular location is the nucleus. In terms of biological role, transcription factor that regulates CIT2 gene expression. Binds to two identical sites oriented as inverted repeats 28 bp apart in a regulatory upstream activation sequence element (UASR) in the CIT2 promoter. The core binding site is 5'-GGTCAC-3'. This Saccharomyces cerevisiae (strain ATCC 204508 / S288c) (Baker's yeast) protein is Retrograde regulation protein 3 (RTG3).